Consider the following 509-residue polypeptide: MIIKKKESFKSPGRLWRVTKIRKLTAAKKNELQNRKCNQASNEEKKILYKSNFLDRFIPSKANSDAFRIMENAFTEKLNTQESLLPDILNLNVKGVLHYKDNKKQKTTRLIESTNYQRQTIHGASSSLVIEVEENGHLSNMQGSLYETPLRILDAPGLLDDFYISPLAWSTNGELAVALAQNVYLWSEISGPSIMELSPTTYEVSSLAYSSDGGFLAIARVNGFVEIWNRKTKNNRCDYKFHHDGDISCMAWSPINWTLLVGGSTGNIYVYRRTKSMMRRVHTIKKVHQEQVCGLEWNYDGTQFASGGNDNLVCIFDIDSLENKKFYWIHLAAVKALAFCPWQKSLLAVGTGSNDQQIYFYDTFRGHRIHSLFCGAQVTSVIWSRRYKEFCYSLGYSPEGTNSSLIVYRWPQLTKVFDIPSAAIDGWGQDLRTIMAIHTHRKYSNNTWEEGEYVVVANSDETVKFYKIWGNEMQEIHNDRVLYREGIFGSHILEMLENIPEQVLTNGVR.

WD repeat units lie at residues 159-196 (LDDF…SIME), 199-238 (PTTY…NRCD), 242-281 (HHDG…MRRV), 287-326 (VHQE…NKKF), 329-371 (IHLA…RIHS), and 437-477 (IHTH…QEIH).

It belongs to the WD repeat CDC20/Fizzy family.

It localises to the nucleus. Has a role in meiosis. This chain is Meiotic fizzy-related protein 2 (mfr2), found in Schizosaccharomyces pombe (strain 972 / ATCC 24843) (Fission yeast).